Reading from the N-terminus, the 39-residue chain is Photosystem I reaction center subunit IX (39 aa).

Residues 4-24 (FLTTAPVVAAIWFTLTAGILI) traverse the membrane as a helical segment.

It belongs to the PsaJ family.

Its subcellular location is the cellular thylakoid membrane. Functionally, may help in the organization of the PsaE and PsaF subunits. This is Photosystem I reaction center subunit IX from Synechococcus sp. (strain CC9311).